A 178-amino-acid chain; its full sequence is Translation initiation factor IF-3 (178 aa).

The protein belongs to the IF-3 family. Monomer.

Its subcellular location is the cytoplasm. Functionally, IF-3 binds to the 30S ribosomal subunit and shifts the equilibrium between 70S ribosomes and their 50S and 30S subunits in favor of the free subunits, thus enhancing the availability of 30S subunits on which protein synthesis initiation begins. The protein is Translation initiation factor IF-3 of Picosynechococcus sp. (strain ATCC 27264 / PCC 7002 / PR-6) (Agmenellum quadruplicatum).